A 626-amino-acid chain; its full sequence is Phosphomethylpyrimidine synthase (626 aa).

The span at 92 to 106 (AREVKPEDNGLKGPD) shows a compositional bias: basic and acidic residues. The segment at 92 to 117 (AREVKPEDNGLKGPDRSAGVPPFPNV) is disordered. Residues Asn219, Met248, Tyr277, His313, 333–335 (SRG), 374–377 (DGLR), and Glu413 each bind substrate. His417 contributes to the Zn(2+) binding site. Residue Tyr440 participates in substrate binding. His481 provides a ligand contact to Zn(2+). 3 residues coordinate [4Fe-4S] cluster: Cys561, Cys564, and Cys569.

Belongs to the ThiC family. Homodimer. [4Fe-4S] cluster is required as a cofactor.

The enzyme catalyses 5-amino-1-(5-phospho-beta-D-ribosyl)imidazole + S-adenosyl-L-methionine = 4-amino-2-methyl-5-(phosphooxymethyl)pyrimidine + CO + 5'-deoxyadenosine + formate + L-methionine + 3 H(+). Its pathway is cofactor biosynthesis; thiamine diphosphate biosynthesis. Its function is as follows. Catalyzes the synthesis of the hydroxymethylpyrimidine phosphate (HMP-P) moiety of thiamine from aminoimidazole ribotide (AIR) in a radical S-adenosyl-L-methionine (SAM)-dependent reaction. The protein is Phosphomethylpyrimidine synthase of Novosphingobium aromaticivorans (strain ATCC 700278 / DSM 12444 / CCUG 56034 / CIP 105152 / NBRC 16084 / F199).